A 226-amino-acid chain; its full sequence is Charged multivesicular body protein 5 (226 aa).

The stretch at 21–93 (IAGVDARATN…NQSFNMEQAN (73 aa)) forms a coiled coil. The segment covering 188–198 (KAPEAPSREPG) has biased composition (basic and acidic residues). A disordered region spans residues 188–226 (KAPEAPSREPGADSIVPGKSTIETDEFGLPKIPTSLKTT). Ser-201 is modified (phosphoserine). The residue at position 226 (Thr-226) is a Phosphothreonine.

Belongs to the SNF7 family. Probable peripherally associated component of the endosomal sorting required for transport complex III (ESCRT-III).

The protein resides in the endosome membrane. In terms of biological role, probable peripherally associated component of the endosomal sorting required for transport complex III (ESCRT-III) which is involved in multivesicular bodies (MVBs) formation and sorting of endosomal cargo proteins into MVBs. MVBs contain intraluminal vesicles (ILVs) that are generated by invagination and scission from the limiting membrane of the endosome and are delivered to lysosomes enabling degradation of membrane proteins. Specifically down-regulates Notch signaling activity in the germarium, probably by facilitating Notch endocytosis. The sequence is that of Charged multivesicular body protein 5 from Drosophila melanogaster (Fruit fly).